The chain runs to 153 residues: Flagellar assembly factor FliW (153 aa).

It belongs to the FliW family. As to quaternary structure, interacts with translational regulator CsrA and flagellin(s).

It is found in the cytoplasm. Its function is as follows. Acts as an anti-CsrA protein, binds CsrA and prevents it from repressing translation of its target genes, one of which is flagellin. Binds to flagellin and participates in the assembly of the flagellum. The chain is Flagellar assembly factor FliW from Heliobacterium modesticaldum (strain ATCC 51547 / Ice1).